The following is a 540-amino-acid chain: Chaperonin GroEL 2 (540 aa).

ATP is bound by residues 30 to 33, K51, 87 to 91, G415, 479 to 481, and D495; these read TLGP, DGTTT, and NAA.

Belongs to the chaperonin (HSP60) family. As to quaternary structure, forms a cylinder of 14 subunits composed of two heptameric rings stacked back-to-back. Interacts with the co-chaperonin GroES.

Its subcellular location is the cytoplasm. The enzyme catalyses ATP + H2O + a folded polypeptide = ADP + phosphate + an unfolded polypeptide.. Functionally, together with its co-chaperonin GroES, plays an essential role in assisting protein folding. The GroEL-GroES system forms a nano-cage that allows encapsulation of the non-native substrate proteins and provides a physical environment optimized to promote and accelerate protein folding. The chain is Chaperonin GroEL 2 from Burkholderia vietnamiensis (strain G4 / LMG 22486) (Burkholderia cepacia (strain R1808)).